A 620-amino-acid chain; its full sequence is Translation initiation factor IF-2 (620 aa).

The tr-type G domain maps to Glu119–Leu288. The G1 stretch occupies residues Gly128–Thr135. Gly128–Thr135 contacts GTP. The tract at residues Gly153–Ala157 is G2. Positions Asp175–Gly178 are G3. GTP is bound by residues Asp175 to His179 and Asn229 to Asp232. Residues Asn229–Asp232 form a G4 region. The segment at Ser265–Ile267 is G5.

Belongs to the TRAFAC class translation factor GTPase superfamily. Classic translation factor GTPase family. IF-2 subfamily.

It localises to the cytoplasm. Its function is as follows. One of the essential components for the initiation of protein synthesis. Protects formylmethionyl-tRNA from spontaneous hydrolysis and promotes its binding to the 30S ribosomal subunits. Also involved in the hydrolysis of GTP during the formation of the 70S ribosomal complex. This chain is Translation initiation factor IF-2, found in Mycoplasma capricolum subsp. capricolum (strain California kid / ATCC 27343 / NCTC 10154).